Consider the following 553-residue polypeptide: Hydroxylamine reductase (553 aa).

Residues cysteine 3, cysteine 6, cysteine 18, and cysteine 25 each contribute to the [2Fe-2S] cluster site. The hybrid [4Fe-2O-2S] cluster site is built by histidine 252, glutamate 276, cysteine 320, cysteine 408, cysteine 436, cysteine 461, glutamate 495, and lysine 497. Residue cysteine 408 is modified to Cysteine persulfide.

Belongs to the HCP family. It depends on [2Fe-2S] cluster as a cofactor. Requires hybrid [4Fe-2O-2S] cluster as cofactor.

It localises to the cytoplasm. The catalysed reaction is A + NH4(+) + H2O = hydroxylamine + AH2 + H(+). Catalyzes the reduction of hydroxylamine to form NH(3) and H(2)O. The protein is Hydroxylamine reductase of Aliivibrio fischeri (strain MJ11) (Vibrio fischeri).